A 131-amino-acid chain; its full sequence is Interleukin-13 (131 aa).

Positions 1-18 (MALWVTAVLALACLGGLA) are cleaved as a signal peptide. 4 N-linked (GlcNAc...) asparagine glycosylation sites follow: N42, N53, N76, and N121. Disulfide bonds link C52/C80 and C68/C94.

The protein belongs to the IL-4/IL-13 family. In terms of assembly, interacts with IL13RA2.

It is found in the secreted. Its function is as follows. Cytokine that plays important roles in allergic inflammation and immune response to parasite infection. Synergizes with IL2 in regulating interferon-gamma synthesis. Stimulates B-cell proliferation, and activation of eosinophils, basophils, and mast cells. Plays an important role in controlling IL33 activity by modulating the production of transmembrane and soluble forms of interleukin-1 receptor-like 1/IL1RL1. Displays the capacity to antagonize Th1-driven proinflammatory immune response and downregulates synthesis of many proinflammatory cytokines including IL1, IL6, IL10, IL12 and TNF-alpha through a mechanism that partially involves suppression of NF-kappa-B. Also functions on nonhematopoietic cells, including endothelial cells where it induces vascular cell adhesion protein 1/VCAM1, which is important in the recruitment of eosinophils. Exerts its biological effects through its receptors which comprises the IL4R chain and the IL13RA1 chain, to activate JAK1 and TYK2, leading to the activation of STAT6. Aside from IL13RA1, another receptor IL13RA2 acts as a high affinity decoy for IL13 and mediates internalization and depletion of extracellular IL13. The chain is Interleukin-13 (Il13) from Rattus norvegicus (Rat).